We begin with the raw amino-acid sequence, 930 residues long: Serine/threonine-protein kinase PknD (930 aa).

One can recognise a Protein kinase domain in the interval 4 to 291 (YDIIRMIGKG…ALKADIEQHL (288 aa)). Residues 10–18 (IGKGGMGEV) and Lys-33 each bind ATP. Asp-138 acts as the Proton acceptor in catalysis.

The protein belongs to the protein kinase superfamily. Ser/Thr protein kinase family. In terms of processing, autophosphorylated on serine and threonine residues.

The catalysed reaction is L-seryl-[protein] + ATP = O-phospho-L-seryl-[protein] + ADP + H(+). It catalyses the reaction L-threonyl-[protein] + ATP = O-phospho-L-threonyl-[protein] + ADP + H(+). Functionally, together with the serine/threonine kinase Pkn1, may play a role in the specific interactions with host proteins during intracellular growth. This is Serine/threonine-protein kinase PknD from Chlamydia caviae (strain ATCC VR-813 / DSM 19441 / 03DC25 / GPIC) (Chlamydophila caviae).